Reading from the N-terminus, the 591-residue chain is Protein NRT1/ PTR FAMILY 4.3 (591 aa).

Over residues 1–10 (MAEINKQSNK) the composition is skewed to polar residues. The tract at residues 1-38 (MAEINKQSNKWEQEEVSNENNWELAEEESVDWRGRPSN) is disordered. 12 consecutive transmembrane segments (helical) span residues 47–67 (AALF…AVGN), 85–105 (ANIV…GGYL), 109–129 (FLGS…GFIL), 157–177 (GFKA…SGCV), 204–224 (FNAA…LLVW), 233–253 (IGFG…VSGT), 347–367 (LISL…LAQL), 395–415 (AIPY…LVPF), 429–449 (LTRI…AAML), 463–483 (ILSI…EMFT), 502–522 (FLMA…SVLV), and 551–571 (LFYW…LFWS).

Belongs to the major facilitator superfamily. Proton-dependent oligopeptide transporter (POT/PTR) (TC 2.A.17) family. As to expression, expressed in flowers. Detected in roots and siliques.

It localises to the membrane. The protein is Protein NRT1/ PTR FAMILY 4.3 (NPF4.3) of Arabidopsis thaliana (Mouse-ear cress).